Consider the following 109-residue polypeptide: MSAQPVDLQIFGRSLRVNCPPEQRDALNQAAEDLNQRLQDLKERTRVTNTEQLVFIAALNISYELTQEKAKTRDYASSMEQRIRMLQQTIEQALLEQGRISEKPGSKFE.

Residues 21–99 adopt a coiled-coil conformation; it reads PEQRDALNQA…IEQALLEQGR (79 aa).

The protein belongs to the ZapA family. Type 1 subfamily. Homodimer. Interacts with FtsZ.

It localises to the cytoplasm. Its function is as follows. Activator of cell division through the inhibition of FtsZ GTPase activity, therefore promoting FtsZ assembly into bundles of protofilaments necessary for the formation of the division Z ring. It is recruited early at mid-cell but it is not essential for cell division. The chain is Cell division protein ZapA from Klebsiella pneumoniae subsp. pneumoniae (strain ATCC 700721 / MGH 78578).